The primary structure comprises 920 residues: Zinc finger MIZ domain-containing protein 2 (920 aa).

2 disordered regions span residues Met-1–Ala-22 and Ser-54–Gly-79. The span at Pro-60 to Gly-79 shows a compositional bias: low complexity. Arg-111 carries the post-translational modification Omega-N-methylarginine. Disordered stretches follow at residues Gly-243–Val-265 and Pro-286–Gln-391. Asymmetric dimethylarginine is present on residues Arg-245 and Arg-262. The segment covering Pro-295 to Ser-304 has biased composition (pro residues). Positions Glu-334–Gly-354 are enriched in polar residues. Pro residues predominate over residues Pro-366–Thr-379. The span at Pro-380–Pro-389 shows a compositional bias: low complexity. Residues Lys-402 and Lys-457 each participate in a glycyl lysine isopeptide (Lys-Gly) (interchain with G-Cter in SUMO2) cross-link. Residues Pro-435–Ser-506 form an interaction with AR region. The SP-RING-type zinc finger occupies Gly-585–Glu-671. Zn(2+)-binding residues include Cys-616, His-618, Cys-639, and Cys-642. Lys-692 participates in a covalent cross-link: Glycyl lysine isopeptide (Lys-Gly) (interchain with G-Cter in SUMO2). A disordered region spans residues Ser-803–Asn-920. A compositionally biased stretch (low complexity) spans Ala-876 to Leu-890. Polar residues predominate over residues Pro-906 to Asn-920.

As to quaternary structure, interacts with AR, SMARCA4/BRG1 and SMARCE1/BAF57. Interaction with either SMARCA4 and SMARCE1 enhances AR-mediated transcription. Expressed most abundantly in testis with lower levels in heart, brain, pancreas, prostate and ovary.

The protein localises to the nucleus. In terms of biological role, increases ligand-dependent transcriptional activity of AR and other nuclear hormone receptors. In Homo sapiens (Human), this protein is Zinc finger MIZ domain-containing protein 2 (ZMIZ2).